Here is a 347-residue protein sequence, read N- to C-terminus: Phenylalanine--tRNA ligase alpha subunit (347 aa).

Position 265 (Glu265) interacts with Mg(2+).

The protein belongs to the class-II aminoacyl-tRNA synthetase family. Phe-tRNA synthetase alpha subunit type 1 subfamily. In terms of assembly, tetramer of two alpha and two beta subunits. Mg(2+) serves as cofactor.

It localises to the cytoplasm. It carries out the reaction tRNA(Phe) + L-phenylalanine + ATP = L-phenylalanyl-tRNA(Phe) + AMP + diphosphate + H(+). The protein is Phenylalanine--tRNA ligase alpha subunit of Wolbachia pipientis subsp. Culex pipiens (strain wPip).